The chain runs to 470 residues: L-seryl-tRNA(Sec) selenium transferase (470 aa).

Position 292 is an N6-(pyridoxal phosphate)lysine (K292).

It belongs to the SelA family. It depends on pyridoxal 5'-phosphate as a cofactor.

The protein localises to the cytoplasm. It carries out the reaction L-seryl-tRNA(Sec) + selenophosphate + H(+) = L-selenocysteinyl-tRNA(Sec) + phosphate. The protein operates within aminoacyl-tRNA biosynthesis; selenocysteinyl-tRNA(Sec) biosynthesis; selenocysteinyl-tRNA(Sec) from L-seryl-tRNA(Sec) (bacterial route): step 1/1. In terms of biological role, converts seryl-tRNA(Sec) to selenocysteinyl-tRNA(Sec) required for selenoprotein biosynthesis. In Moorella thermoacetica (strain ATCC 39073 / JCM 9320), this protein is L-seryl-tRNA(Sec) selenium transferase.